The following is a 479-amino-acid chain: PRAME family member 18 (479 aa).

The stretch at 15–38 (QSLLRDQALAISVLDELPRELFPP) is one LRR 1 repeat. The LRR 1; degenerate repeat unit spans residues 97–124 (RWKLQVLEMRDVDENFWTIWSGARLLSC). An LRR 2; degenerate repeat occupies 179–203 (HLCCTKVVNYSMSILNFRNILETVY). One copy of the LRR 3; degenerate repeat lies at 204–230 (PDSIQVLEIWNMCWLCMIVEFSRYLSQ). An LRR 4; degenerate repeat occupies 231–265 (MRNLRKLFISDGCRYLLSSDSQEQLVAEFSSVLLR). LRR repeat units lie at residues 266-291 (LENLQMLYVRRVCFFRGHLDQLIRCL), 292-323 (RSPLETLALTYGFLEEEDLKCLPRYPSLSQLK), 324-342 (QLNLSHGALRFIRLEPLRA), 348-375 (AATLQTLFLVDCGIGYSKLRVILPALSR), and 376-400 (CSNLTTFCFHGNDTSMDALKDLLRH).

The protein belongs to the PRAME family.

This Homo sapiens (Human) protein is PRAME family member 18.